The primary structure comprises 1139 residues: Autophagy-related protein 23 (1139 aa).

9 disordered regions span residues 1–148 (MFQR…EMSP), 225–327 (STDK…YDDE), 356–388 (LTTA…SVKD), 475–569 (KNEK…DTAG), 648–674 (KKIS…KTEY), 720–767 (RQES…RETE), 786–828 (EDAQ…SKLR), 935–961 (AAVE…TEDL), and 977–1012 (HERD…ELRT). The segment covering 7–18 (SAIDRTIAEEQA) has biased composition (basic and acidic residues). Positions 19-37 (RQQTATQSRSPSRTGSTSS) are enriched in low complexity. Coiled coils occupy residues 142–170 (KLQE…LLRS) and 215–259 (DMVM…STDQ). 4 stretches are compositionally biased toward basic and acidic residues: residues 225–247 (STDK…KLEE), 261–273 (KTSD…DAQD), 373–385 (ATRE…DVAS), and 475–494 (KNEK…KLES). A coiled-coil region spans residues 323–495 (SYDDEIPQLQ…TDLTKKLESK (173 aa)). Over residues 496 to 522 (PAPAMLTPAATPMPTVLQPAATSATAA) the composition is skewed to low complexity. Basic residues predominate over residues 526–537 (GKKKNNKKKKGK). Residues 566 to 1067 (DTAGNAELKA…AAQTKLVASS (502 aa)) are a coiled coil. Positions 651–661 (SSSTSDAEASS) are enriched in low complexity. Composition is skewed to basic and acidic residues over residues 728–767 (ATKE…RETE), 786–815 (EDAQ…KAEQ), 935–945 (AAVEERDRIED), and 977–1011 (HERD…DELR). The region spanning 1082–1132 (SPAGAPDTVYLKTILLQFLEQKDTKLRAQLVPVLGKLLRFDKTDEQKWQKA) is the GRIP domain.

Belongs to the ATG23 family. Forms a complex with ATG9 and ATG27.

It localises to the cytoplasm. It is found in the preautophagosomal structure membrane. Required for cytoplasm to vacuole transport (Cvt) vesicle formation and efficient autophagy. Plays a role in ATG protein retrieval from the pre-autophagosomal structure (PAS) and is especially required for autophagy-dependent cycling of ATG9. Autophagy is required for proper vegetative growth, asexual/sexual reproduction, and full virulence. Autophagy is particularly involved in the biosynthesis of deoxynivalenol (DON), an important virulence determinant. This chain is Autophagy-related protein 23, found in Gibberella zeae (strain ATCC MYA-4620 / CBS 123657 / FGSC 9075 / NRRL 31084 / PH-1) (Wheat head blight fungus).